A 70-amino-acid polypeptide reads, in one-letter code: Large ribosomal subunit protein eL43 (70 aa).

Zn(2+) contacts are provided by Cys-36, Cys-39, Cys-55, and Cys-58. Residues 36–58 (CPYCKTTGKVIRLASGIWYCKKC) form a C4-type zinc finger.

The protein belongs to the eukaryotic ribosomal protein eL43 family. Putative zinc-binding subfamily. As to quaternary structure, part of the 50S ribosomal subunit. Zn(2+) serves as cofactor.

In terms of biological role, binds to the 23S rRNA. The chain is Large ribosomal subunit protein eL43 from Saccharolobus solfataricus (strain ATCC 35092 / DSM 1617 / JCM 11322 / P2) (Sulfolobus solfataricus).